Consider the following 71-residue polypeptide: High-potential iron-sulfur protein isozyme 2 (71 aa).

Positions 34, 37, 51, and 65 each coordinate [4Fe-4S] cluster.

Belongs to the high-potential iron-sulfur protein (HiPIP) family. In terms of assembly, homodimer.

Functionally, specific class of high-redox-potential 4Fe-4S ferredoxins. Functions in anaerobic electron transport in most purple and in some other photosynthetic bacteria and in at least one genus (Paracoccus) of halophilic, denitrifying bacteria. This is High-potential iron-sulfur protein isozyme 2 (hip2) from Ectothiorhodospira shaposhnikovii (Ectothiorhodospira vacuolata).